Consider the following 1087-residue polypeptide: Kinesin-like protein KIN-14F (1087 aa).

A Calponin-homology (CH) domain is found at 1-110; the sequence is MDQGAMETLP…CILCLKGFYE (110 aa). Residues 136–155 form a disordered region; that stretch reads SSPPQYGIGSESTTDESVSL. A Kinesin motor domain is found at 377 to 705; sequence TIRVYCRVRP…LKFAQRVASI (329 aa). Residue 461 to 468 coordinates ATP; that stretch reads GQTGSGKT. Residues 710-749 adopt a coiled-coil conformation; it reads ARSNKETGEIRDLKDEISSLKSAMEKKEAELEQLRSGSIR. Disordered stretches follow at residues 740–858, 923–949, and 1004–1087; these read LEQL…PVSR, QGGVKKTRAESSKAKAKQPSPARFQKL, and DSTL…FMVP. Composition is skewed to polar residues over residues 744–754, 780–797, and 836–856; these read RSGSIRNTTEC, PQPNDGTRSYETRSCSTG, and TDRASTIKSRNKPDVTQNLPV. Over residues 1017–1033 the composition is skewed to polar residues; the sequence is EPPSKSKNAQRNSSKNS. The segment covering 1042–1054 has biased composition (basic and acidic residues); the sequence is YAHEDTSLVDDKP. Residues 1076 to 1087 are compositionally biased toward basic residues; that stretch reads SRSTHHARFMVP.

This sequence belongs to the TRAFAC class myosin-kinesin ATPase superfamily. Kinesin family. KIN-14 subfamily. Interacts (via C-terminus) with VDAC3. In terms of tissue distribution, expressed in roots, leaves, stems and flowers (at protein level).

Its subcellular location is the cytoplasm. It localises to the cytoskeleton. The protein resides in the mitochondrion. Functionally, required for keeping the ATP levels stable and balancing the aerobic respiration pathways during seed germination at low temperature. In Arabidopsis thaliana (Mouse-ear cress), this protein is Kinesin-like protein KIN-14F.